A 144-amino-acid chain; its full sequence is Bacilliredoxin BCE33L1972 (144 aa).

This sequence belongs to the bacilliredoxin family.

The chain is Bacilliredoxin BCE33L1972 from Bacillus cereus (strain ZK / E33L).